Consider the following 468-residue polypeptide: ATP synthase subunit beta (468 aa).

155 to 162 (GGAGVGKT) provides a ligand contact to ATP.

The protein belongs to the ATPase alpha/beta chains family. In terms of assembly, F-type ATPases have 2 components, CF(1) - the catalytic core - and CF(0) - the membrane proton channel. CF(1) has five subunits: alpha(3), beta(3), gamma(1), delta(1), epsilon(1). CF(0) has three main subunits: a(1), b(2) and c(9-12). The alpha and beta chains form an alternating ring which encloses part of the gamma chain. CF(1) is attached to CF(0) by a central stalk formed by the gamma and epsilon chains, while a peripheral stalk is formed by the delta and b chains.

The protein localises to the cell membrane. The catalysed reaction is ATP + H2O + 4 H(+)(in) = ADP + phosphate + 5 H(+)(out). In terms of biological role, produces ATP from ADP in the presence of a proton gradient across the membrane. The catalytic sites are hosted primarily by the beta subunits. This chain is ATP synthase subunit beta, found in Streptococcus pneumoniae (strain Taiwan19F-14).